A 1526-amino-acid chain; its full sequence is DNA topoisomerase 2-alpha (1526 aa).

Residue M1 is modified to N-acetylmethionine. Residues M1–E21 are disordered. A Phosphoserine modification is found at S4. Residue K17 forms a Glycyl lysine isopeptide (Lys-Gly) (interchain with G-Cter in SUMO2) linkage. Residues N90, N119, and S147–N149 each bind ATP. Residues K155 and K156 each participate in a glycyl lysine isopeptide (Lys-Gly) (interchain with G-Cter in SUMO2) cross-link. Residue G160–K167 coordinates ATP. K260 is covalently cross-linked (Glycyl lysine isopeptide (Lys-Gly) (interchain with G-Cter in SUMO2)). Position 281 is a phosphothreonine (T281). The interval K341–K343 is interaction with DNA. Residue K351 forms a Glycyl lysine isopeptide (Lys-Gly) (interchain with G-Cter in SUMO2) linkage. Q375 to K377 is a binding site for ATP. Residues K385, K396, K415, K417, K424, and K439 each participate in a glycyl lysine isopeptide (Lys-Gly) (interchain with G-Cter in SUMO2) cross-link. The Toprim domain occupies C454–E571. E460 serves as a coordination point for Mg(2+). Glycyl lysine isopeptide (Lys-Gly) (interchain with G-Cter in SUMO2) cross-links involve residues K465, K479, and K528. D540 and D542 together coordinate Mg(2+). Residues K583, K598, K613, K621, K624, K631, K638, K654, K661, and K675 each participate in a glycyl lysine isopeptide (Lys-Gly) (interchain with G-Cter in SUMO2) cross-link. The Topo IIA-type catalytic domain occupies I714–L1166. The active-site O-(5'-phospho-DNA)-tyrosine intermediate is the Y804. Residues K989 to S998 form an interaction with DNA region. A Glycyl lysine isopeptide (Lys-Gly) (interchain with G-Cter in SUMO2) cross-link involves residue K1074. 2 disordered regions span residues W1089–G1117 and E1180–Q1217. The segment covering D1098–N1109 has biased composition (acidic residues). S1105 carries the phosphoserine; by CK1 modification. Glycyl lysine isopeptide (Lys-Gly) (interchain with G-Cter in SUMO2) cross-links involve residues K1191 and K1199. S1208 carries the phosphoserine modification. Residue K1223 forms a Glycyl lysine isopeptide (Lys-Gly) (interchain with G-Cter in SUMO2) linkage. Residues K1233–F1526 form a disordered region. K1235 participates in a covalent cross-link: Glycyl lysine isopeptide (Lys-Gly) (interchain with G-Cter in SUMO1); alternate. Residue K1235 forms a Glycyl lysine isopeptide (Lys-Gly) (interchain with G-Cter in SUMO2); alternate linkage. T1242 is subject to Phosphothreonine. K1254 is covalently cross-linked (Glycyl lysine isopeptide (Lys-Gly) (interchain with G-Cter in SUMO2)). The segment covering Q1255–P1265 has biased composition (basic and acidic residues). Glycyl lysine isopeptide (Lys-Gly) (interchain with G-Cter in SUMO2) cross-links involve residues K1271, K1278, and K1281. A phosphoserine mark is found at S1290, S1292, S1294, and S1297. T1322 carries the post-translational modification Phosphothreonine. A compositionally biased stretch (acidic residues) spans L1325–F1344. A phosphoserine mark is found at S1327 and S1332. T1349 bears the Phosphothreonine mark. Glycyl lysine isopeptide (Lys-Gly) (interchain with G-Cter in SUMO2) cross-links involve residues K1358, K1362, and K1368. Phosphoserine is present on residues S1369 and S1372. A Glycyl lysine isopeptide (Lys-Gly) (interchain with G-Cter in SUMO2) cross-link involves residue K1380. S1382 and S1386 each carry phosphoserine. Over residues S1405–G1426 the composition is skewed to low complexity. A Glycyl lysine isopeptide (Lys-Gly) (interchain with G-Cter in SUMO2); alternate cross-link involves residue K1417. Residue K1417 is modified to N6-acetyllysine; alternate. Positions K1428–K1434 are interaction with PLSCR1. K1437 is covalently cross-linked (Glycyl lysine isopeptide (Lys-Gly) (interchain with G-Cter in SUMO2); alternate). N6-acetyllysine; alternate is present on K1437. Glycyl lysine isopeptide (Lys-Gly) (interchain with G-Cter in SUMO2) cross-links involve residues K1449 and K1454. 4 positions are modified to phosphoserine: S1464, S1466, S1469, and S1471. Residues K1479 and K1487 each participate in a glycyl lysine isopeptide (Lys-Gly) (interchain with G-Cter in SUMO2) cross-link. The span at S1486–L1497 shows a compositional bias: basic and acidic residues. Residue S1520 is modified to Phosphoserine.

This sequence belongs to the type II topoisomerase family. In terms of assembly, homodimer. Interacts with COPS5. Interacts with RECQL5; this stimulates DNA decatenation. Interacts with SETMAR; stimulates the topoisomerase activity. Interacts with DHX9; this interaction occurs in a E2 enzyme UBE2I- and RNA-dependent manner, negatively regulates DHX9-mediated double-stranded DNA and RNA duplex helicase activity and stimulates TOP2A-mediated supercoiled DNA relaxation activity. Interacts with HNRNPU (via C-terminus); this interaction protects the topoisomerase TOP2A from degradation and positively regulates the relaxation of supercoiled DNA in a RNA-dependent manner. Interacts with MCM3AP. Interacts with ERCC6. Interacts with PLSCR1. Interacts with GCNA; this interaction allows the resolution of topoisomerase II (TOP2A) DNA-protein cross-links. Interacts with POL1RA/RPA1 (via dock II) and UBTF in the context of Pol I complex; may assist Pol I transcription initiation by releasing supercoils occurring during DNA unwinding. Interacts with TPRN; TPRN interacts with a number of DNA damage response proteins, is recruited to sites of DNA damage and may play a role in DNA damage repair. Mg(2+) is required as a cofactor. The cofactor is Mn(2+). Requires Ca(2+) as cofactor. In terms of processing, phosphorylation has no effect on catalytic activity. However, phosphorylation at Ser-1105 by CSNK1D/CK1 promotes DNA cleavable complex formation.

Its subcellular location is the cytoplasm. It localises to the nucleus. The protein localises to the nucleoplasm. The protein resides in the nucleolus. It carries out the reaction ATP-dependent breakage, passage and rejoining of double-stranded DNA.. Its function is as follows. Key decatenating enzyme that alters DNA topology by binding to two double-stranded DNA molecules, generating a double-stranded break in one of the strands, passing the intact strand through the broken strand, and religating the broken strand. May play a role in regulating the period length of BMAL1 transcriptional oscillation. This is DNA topoisomerase 2-alpha (TOP2A) from Cricetulus griseus (Chinese hamster).